Consider the following 184-residue polypeptide: Ribosome-recycling factor (184 aa).

It belongs to the RRF family.

Its subcellular location is the cytoplasm. Functionally, responsible for the release of ribosomes from messenger RNA at the termination of protein biosynthesis. May increase the efficiency of translation by recycling ribosomes from one round of translation to another. The protein is Ribosome-recycling factor of Leptospira interrogans serogroup Icterohaemorrhagiae serovar copenhageni (strain Fiocruz L1-130).